Reading from the N-terminus, the 431-residue chain is Enolase (431 aa).

(2R)-2-phosphoglycerate is bound at residue glutamine 167. Residue glutamate 209 is the Proton donor of the active site. Residues aspartate 246, glutamate 290, and aspartate 317 each contribute to the Mg(2+) site. Positions 342, 371, 372, and 393 each coordinate (2R)-2-phosphoglycerate. Lysine 342 acts as the Proton acceptor in catalysis.

Belongs to the enolase family. In terms of assembly, component of the RNA degradosome, a multiprotein complex involved in RNA processing and mRNA degradation. It depends on Mg(2+) as a cofactor.

The protein resides in the cytoplasm. It is found in the secreted. The protein localises to the cell surface. It carries out the reaction (2R)-2-phosphoglycerate = phosphoenolpyruvate + H2O. The protein operates within carbohydrate degradation; glycolysis; pyruvate from D-glyceraldehyde 3-phosphate: step 4/5. In terms of biological role, catalyzes the reversible conversion of 2-phosphoglycerate (2-PG) into phosphoenolpyruvate (PEP). It is essential for the degradation of carbohydrates via glycolysis. This Yersinia enterocolitica serotype O:8 / biotype 1B (strain NCTC 13174 / 8081) protein is Enolase.